The sequence spans 90 residues: Mitochondrial import inner membrane translocase subunit Tim8 A (90 aa).

The Twin CX3C motif motif lies at 36–59 (CWEKCMDKPGPKLDSRTEVCFVNC). Cystine bridges form between C36–C59 and C40–C55.

Belongs to the small Tim family. In terms of assembly, heterohexamer; composed of 3 copies of TIMM8A and 3 copies of TIMM13, named soluble 70 kDa complex. Associates with the TIM22 complex, whose core is composed of TIMM22.

It is found in the mitochondrion inner membrane. Mitochondrial intermembrane chaperone that participates in the import and insertion of some multi-pass transmembrane proteins into the mitochondrial inner membrane. Also required for the transfer of beta-barrel precursors from the TOM complex to the sorting and assembly machinery (SAM complex) of the outer membrane. Acts as a chaperone-like protein that protects the hydrophobic precursors from aggregation and guide them through the mitochondrial intermembrane space. The TIMM8-TIMM13 complex mediates the import of some proteins while the predominant TIMM9-TIMM10 70 kDa complex mediates the import of much more proteins. The chain is Mitochondrial import inner membrane translocase subunit Tim8 A (timm8a) from Danio rerio (Zebrafish).